Consider the following 339-residue polypeptide: Dual specificity protein phosphatase 12 (339 aa).

Met-1 is modified (N-acetylmethionine). The segment at 1 to 25 (MLEAQGSNHGCERQAPTASPASSAG) is disordered. The Tyrosine-protein phosphatase domain maps to 26–170 (HAVEVRPGLY…LKLYEAMGYE (145 aa)). Cys-114 serves as the catalytic Phosphocysteine intermediate. 115 to 120 (HAGVSR) contributes to the substrate binding site. Ser-334 is modified (phosphoserine).

The protein belongs to the protein-tyrosine phosphatase family. Non-receptor class dual specificity subfamily. Monomer. Requires Zn(2+) as cofactor.

The protein localises to the nucleus. Its subcellular location is the cytoplasm. It is found in the cytosol. The catalysed reaction is O-phospho-L-tyrosyl-[protein] + H2O = L-tyrosyl-[protein] + phosphate. The enzyme catalyses O-phospho-L-seryl-[protein] + H2O = L-seryl-[protein] + phosphate. It catalyses the reaction O-phospho-L-threonyl-[protein] + H2O = L-threonyl-[protein] + phosphate. In terms of biological role, dual specificity phosphatase; can dephosphorylate both phosphotyrosine and phosphoserine or phosphothreonine residues. Can dephosphorylate glucokinase (in vitro). Has phosphatase activity with the synthetic substrate 6,8-difluoro-4-methylumbelliferyl phosphate and other in vitro substrates. This is Dual specificity protein phosphatase 12 (Dusp12) from Mus musculus (Mouse).